A 406-amino-acid chain; its full sequence is Peptidase T (406 aa).

His-78 provides a ligand contact to Zn(2+). Residue Asp-80 is part of the active site. Asp-139 is a binding site for Zn(2+). Glu-173 serves as the catalytic Proton acceptor. The Zn(2+) site is built by Glu-174, Asp-196, and His-378.

The protein belongs to the peptidase M20B family. Requires Zn(2+) as cofactor.

It localises to the cytoplasm. The enzyme catalyses Release of the N-terminal residue from a tripeptide.. Its function is as follows. Cleaves the N-terminal amino acid of tripeptides. This chain is Peptidase T, found in Clostridium perfringens (strain 13 / Type A).